The chain runs to 364 residues: MKTNLLNYDLQGLTRHFADTGEKPFRAKQVMRWMHQSGAQNFNEMTDLAKSLRHKLNEQASIEIPKLMMSQESSDGTRKWLLDVGTGNGVETVFIPESDRGTLCISSQVGCALECTFCSTGRQGFNRNLTAAEIIGQLWWANKAMGVTPKNERVISNVVMMGMGEPMANFDNVVTALSIMLDDHGYGLSRRRVTVSTSGMVPQMDRLRDVMPVALAVSLHASNDEVRNQIVPLNKKYPLKELMAACQRYLVKAPRDFITFEYVMLDGINDRAQHARELIELVKDVPCKFNLIPFNPFPNSGYERSSNENIRVFRDILQQAGFVVTVRKTRGDDIDAACGQLAGQVQDKTRRQQKWQQILIGQQG.

Catalysis depends on Glu-91, which acts as the Proton acceptor. One can recognise a Radical SAM core domain in the interval 97-333 (ESDRGTLCIS…VTVRKTRGDD (237 aa)). Cys-104 and Cys-338 are disulfide-bonded. Positions 111, 115, and 118 each coordinate [4Fe-4S] cluster. Residues 164-165 (GE), Ser-196, 218-220 (SLH), and Asn-295 contribute to the S-adenosyl-L-methionine site. Cys-338 (S-methylcysteine intermediate) is an active-site residue.

This sequence belongs to the radical SAM superfamily. RlmN family. [4Fe-4S] cluster is required as a cofactor.

It localises to the cytoplasm. It catalyses the reaction adenosine(2503) in 23S rRNA + 2 reduced [2Fe-2S]-[ferredoxin] + 2 S-adenosyl-L-methionine = 2-methyladenosine(2503) in 23S rRNA + 5'-deoxyadenosine + L-methionine + 2 oxidized [2Fe-2S]-[ferredoxin] + S-adenosyl-L-homocysteine. The catalysed reaction is adenosine(37) in tRNA + 2 reduced [2Fe-2S]-[ferredoxin] + 2 S-adenosyl-L-methionine = 2-methyladenosine(37) in tRNA + 5'-deoxyadenosine + L-methionine + 2 oxidized [2Fe-2S]-[ferredoxin] + S-adenosyl-L-homocysteine. Its function is as follows. Specifically methylates position 2 of adenine 2503 in 23S rRNA and position 2 of adenine 37 in tRNAs. m2A2503 modification seems to play a crucial role in the proofreading step occurring at the peptidyl transferase center and thus would serve to optimize ribosomal fidelity. This chain is Dual-specificity RNA methyltransferase RlmN, found in Neisseria meningitidis serogroup C (strain 053442).